A 495-amino-acid chain; its full sequence is Meiosis-specific nuclear structural protein 1 (495 aa).

The segment at 1 to 314 is interaction with BBOF1; the sequence is MGSKRRNLSC…KLEEMLRQRE (314 aa). A coiled-coil region spans residues 28-410; it reads VQALKNVNSQ…QLEHRRAVEK (383 aa). The residue at position 188 (Tyr-188) is a Phosphotyrosine.

This sequence belongs to the MNS1 family. As to quaternary structure, able to form oligomers. Microtubule inner protein component of sperm flagellar doublet microtubules. Interacts with ODAD1. Interacts with BBOF1. As to expression, expressed in nasal respiratory epithelium and in the sperm.

It is found in the nucleus. The protein localises to the cytoplasm. The protein resides in the cytoskeleton. Its subcellular location is the cilium axoneme. It localises to the flagellum axoneme. Its function is as follows. Microtubule inner protein (MIP) part of the dynein-decorated doublet microtubules (DMTs) in cilia axoneme, which is required for motile cilia beating. May play a role in the control of meiotic division and germ cell differentiation through regulation of pairing and recombination during meiosis. Required for sperm flagella assembly. May play a role in the assembly and function of the outer dynein arm-docking complex (ODA-DC). ODA-DC mediates outer dynein arms (ODA) binding onto the axonemal doublet microtubules. The chain is Meiosis-specific nuclear structural protein 1 from Homo sapiens (Human).